The following is a 139-amino-acid chain: Large ribosomal subunit protein uL16 (139 aa).

The segment at 74-94 (LTKKPAETRQGSGKGSPESWV) is disordered.

Belongs to the universal ribosomal protein uL16 family. Part of the 50S ribosomal subunit.

In terms of biological role, binds 23S rRNA and is also seen to make contacts with the A and possibly P site tRNAs. In Saccharopolyspora erythraea (strain ATCC 11635 / DSM 40517 / JCM 4748 / NBRC 13426 / NCIMB 8594 / NRRL 2338), this protein is Large ribosomal subunit protein uL16.